The primary structure comprises 217 residues: Kunitz-type trypsin inhibitor-like 2 protein (217 aa).

The first 26 residues, 1 to 26, serve as a signal peptide directing secretion; that stretch reads MKPLSPLTLSFLLFVFITTLSLAFSN. Disulfide bonds link Cys-70-Cys-115 and Cys-168-Cys-175. Asn-191 carries an N-linked (GlcNAc...) asparagine glycan.

Belongs to the protease inhibitor I3 (leguminous Kunitz-type inhibitor) family.

The protein localises to the secreted. Its function is as follows. Might act as a protease inhibitor involved in plant defense responses. The chain is Kunitz-type trypsin inhibitor-like 2 protein (PIP20-2) from Pisum sativum (Garden pea).